The following is a 129-amino-acid chain: Urease subunit beta (129 aa).

It belongs to the urease beta subunit family. Heterotrimer of UreA (gamma), UreB (beta) and UreC (alpha) subunits. Three heterotrimers associate to form the active enzyme.

It is found in the cytoplasm. The catalysed reaction is urea + 2 H2O + H(+) = hydrogencarbonate + 2 NH4(+). It functions in the pathway nitrogen metabolism; urea degradation; CO(2) and NH(3) from urea (urease route): step 1/1. This Photorhabdus laumondii subsp. laumondii (strain DSM 15139 / CIP 105565 / TT01) (Photorhabdus luminescens subsp. laumondii) protein is Urease subunit beta.